A 179-amino-acid polypeptide reads, in one-letter code: Large ribosomal subunit protein bL27c (179 aa).

The N-terminal 51 residues, 1–51 (MAVSFSLVGAFKGLSLASSSSFLKGDFGAAFPVAPKFSVSFPLKSPLTIES), are a transit peptide targeting the chloroplast.

Belongs to the bacterial ribosomal protein bL27 family. In terms of assembly, part of the 50S ribosomal subunit.

Its subcellular location is the plastid. It localises to the chloroplast. This Nicotiana tabacum (Common tobacco) protein is Large ribosomal subunit protein bL27c (RPL27).